A 237-amino-acid polypeptide reads, in one-letter code: Heme oxygenase (237 aa).

Position 17 (His-17) interacts with heme b.

It belongs to the heme oxygenase family.

Its subcellular location is the plastid. The protein localises to the chloroplast. The catalysed reaction is heme b + 3 reduced [NADPH--hemoprotein reductase] + 3 O2 = biliverdin IXalpha + CO + Fe(2+) + 3 oxidized [NADPH--hemoprotein reductase] + 3 H2O + H(+). Functionally, catalyzes the opening of the heme ring with the release of iron. Key enzyme in the synthesis of the chromophoric part of the photosynthetic antennae. This Guillardia theta (Cryptophyte) protein is Heme oxygenase (pbsA).